A 570-amino-acid polypeptide reads, in one-letter code: Sulfite reductase [NADPH] hemoprotein beta-component (570 aa).

4 residues coordinate [4Fe-4S] cluster: C434, C440, C479, and C483. C483 serves as a coordination point for siroheme.

This sequence belongs to the nitrite and sulfite reductase 4Fe-4S domain family. In terms of assembly, alpha(8)-beta(8). The alpha component is a flavoprotein, the beta component is a hemoprotein. The cofactor is siroheme. [4Fe-4S] cluster is required as a cofactor.

The catalysed reaction is hydrogen sulfide + 3 NADP(+) + 3 H2O = sulfite + 3 NADPH + 4 H(+). Its pathway is sulfur metabolism; hydrogen sulfide biosynthesis; hydrogen sulfide from sulfite (NADPH route): step 1/1. Functionally, component of the sulfite reductase complex that catalyzes the 6-electron reduction of sulfite to sulfide. This is one of several activities required for the biosynthesis of L-cysteine from sulfate. The polypeptide is Sulfite reductase [NADPH] hemoprotein beta-component (Escherichia coli O7:K1 (strain IAI39 / ExPEC)).